A 2346-amino-acid polypeptide reads, in one-letter code: Nucleoprotein TPR (2346 aa).

4 coiled-coil regions span residues 38-190, 217-366, 395-493, and 565-596; these read DEYC…HKEI, QLQS…NLES, YAKS…SRQV, and KMLL…NNTV. Positions 622 to 649 are disordered; it reads VDLDDSNLEPNDSALDTSEQPAANFEES. A compositionally biased stretch (polar residues) spans 629–642; sequence LEPNDSALDTSEQP. 2 coiled-coil regions span residues 643–1158 and 1196–1247; these read AANF…IEAL and EEGR…DELN. Residues 1187–1655 form an interacts with Mad1 region; it reads LNASGLTAAE…SPRTANVKPM (469 aa). Thr1259, Thr1302, Thr1338, and Thr1390 each carry phosphothreonine. 2 coiled-coil regions span residues 1281–1536 and 1579–1627; these read TDSN…KRTE and SYDE…GSQQ. Composition is skewed to polar residues over residues 1621-1649 and 1657-1667; these read RQLG…SPRT and GSATVQQSATV. 3 disordered regions span residues 1621–1677, 1695–1768, and 1821–2346; these read RQLG…ETPL, PTSQ…YMPS, and SPRV…GRFP. Over residues 1702–1722 the composition is skewed to low complexity; the sequence is AGSSTSTSSSSSSSSTSTTSA. Residues 1738-1747 show a composition bias toward polar residues; that stretch reads PQQQVHTTGS. Low complexity-rich tracts occupy residues 1752–1761 and 1827–1878; these read SMASSSPTSS and SSSS…PSSS. Polar residues predominate over residues 1879 to 1891; sequence NVTTTQAGCSSQG. A compositionally biased stretch (acidic residues) spans 1953–2023; that stretch reads QEDDIQVVDS…QDNNEVDIEV (71 aa). The segment covering 2028-2080 has biased composition (polar residues); that stretch reads MQAQEESQSLDNQAIATASASTQENNQSQAITSGSGESSNPVTLPQAEASNWK. A compositionally biased stretch (low complexity) spans 2082–2091; the sequence is AAASTSTAAA. 2 stretches are compositionally biased toward polar residues: residues 2097–2110 and 2142–2159; these read SVEI…SNFC and GAAS…GESS. The segment covering 2165 to 2184 has biased composition (basic and acidic residues); the sequence is KAADDGGDHADGTDNAREAD. Polar residues-rich tracts occupy residues 2193 to 2223 and 2302 to 2322; these read ATGQ…NQAN and RDTS…NRFA. A compositionally biased stretch (basic residues) spans 2323 to 2332; that stretch reads QRTRNRRPIR.

It belongs to the TPR family. In terms of assembly, part of the nuclear pore complex (NPC). Associates with male-specific lethal (MSL) histone acetyltransferase complex. Interacts with Mad2; the interaction is required for efficient recruitment of Mad2 to unattached kinetochore and occurs in a microtubule-independent manner. Interacts with Mad1 (N-terminus). Interacts with Chro, east and Asator; the interaction is part of a macromolecular complex forming the spindle matrix during mitosis. Interacts with Nup98. In males, interacts with histone acetyltransferase mof. Mps1-mediated phosphorylation disrupts interaction with Mad1 during mitosis. Expressed in salivary glands, fat body, tracheal tube, esophageal tube and anterior ejaculatory duct (at protein level).

It localises to the nucleus. Its subcellular location is the nucleus matrix. The protein localises to the nucleus lamina. It is found in the nucleus envelope. The protein resides in the nucleus membrane. It localises to the nuclear pore complex. Its subcellular location is the cytoplasm. The protein localises to the cytoskeleton. It is found in the spindle. The protein resides in the chromosome. It localises to the centromere. Its subcellular location is the kinetochore. The protein localises to the midbody. Component of the nuclear pore complex (NPC), a complex required for the trafficking across the nuclear envelope. Functions as a scaffolding element in the nuclear phase of the NPC. Plays a role in chromosomal organization and gene expression regulation; stimulates transcription by promoting the formation of an open chromatin environment. Binds chromatin to nucleoporin-associated regions (NARs) that define transcriptionally active regions of the genome. Associates with extended chromosomal regions that alternate between domains of high density binding with those of low occupancy. Preferentially binds to NARs of the male X chromosome. In males, together with Nup153, required for the localization of the male-specific lethal (MSL) histone acetyltransferase complex to the X chromosome and therefore for the transcription of dosage compensation genes. In males, restrains dosage-compensated expression at the level of nascent transcription probably by interacting with the MSL complex and by modulating RNA Polymerase II phosphorylation status and activity. During mitosis forms a gel-like spindle matrix complex together with Skeletor (Skel), Chro, east, and Asator embedding the microtubule spindle apparatus. During interphase localizes Mad1 to the nuclear pore complex and thereby might act as a scaffold to assemble the Mad1-C-Mad2 complex, a heterotetramer that catalyzes the structural conversion of open-Mad2 (O-Mad2) into closed-Mad2 (C-Mad2) which is essential for spindle-assembly checkpoint (SAC). During the metaphase-anaphase transition and before chromosome congression, is phosphorylated by Msp-1; this modification releases Mad1 from the nuclear pore complex and thereby promotes assembly of SAC ensuring a timely and effective recruitment of spindle checkpoint proteins like Mad1, Mad2 and Mps1 to unattached kinetochores (KT). In testes, has a role in stem cell asymmetric division and maintenance via regulation of mitotic spindle assembly checkpoint (SAC) complex. This chain is Nucleoprotein TPR, found in Drosophila melanogaster (Fruit fly).